We begin with the raw amino-acid sequence, 422 residues long: UDP-N-acetylglucosamine 1-carboxyvinyltransferase (422 aa).

Position 22–23 (22–23 (KN)) interacts with phosphoenolpyruvate. Position 93 (Arg93) interacts with UDP-N-acetyl-alpha-D-glucosamine. Cys117 functions as the Proton donor in the catalytic mechanism. 2-(S-cysteinyl)pyruvic acid O-phosphothioketal is present on Cys117. UDP-N-acetyl-alpha-D-glucosamine-binding positions include 122–126 (RPVDQ), Asp305, and Ile327.

Belongs to the EPSP synthase family. MurA subfamily.

It is found in the cytoplasm. The catalysed reaction is phosphoenolpyruvate + UDP-N-acetyl-alpha-D-glucosamine = UDP-N-acetyl-3-O-(1-carboxyvinyl)-alpha-D-glucosamine + phosphate. The protein operates within cell wall biogenesis; peptidoglycan biosynthesis. Cell wall formation. Adds enolpyruvyl to UDP-N-acetylglucosamine. This Bordetella petrii (strain ATCC BAA-461 / DSM 12804 / CCUG 43448) protein is UDP-N-acetylglucosamine 1-carboxyvinyltransferase.